Consider the following 586-residue polypeptide: Probable transporter AQR1 (586 aa).

Disordered stretches follow at residues Met-1 to Ala-44 and Glu-61 to Gln-82. At Met-1–Lys-99 the chain is on the extracellular side. Positions Asn-19 to Asn-40 are enriched in basic and acidic residues. A helical transmembrane segment spans residues Trp-100–Tyr-120. Residues Tyr-121–Asn-139 lie on the Cytoplasmic side of the membrane. The chain crosses the membrane as a helical span at residues Val-140–Ala-160. The Extracellular segment spans residues Asp-161 to Arg-166. The helical transmembrane segment at Pro-167–Pro-187 threads the bilayer. Residue Ser-188 is a topological domain, cytoplasmic. A helical membrane pass occupies residues Tyr-189 to Ile-209. The Extracellular portion of the chain corresponds to Ser-210 to Thr-225. The chain crosses the membrane as a helical span at residues Phe-226 to Ala-246. At Val-247 to Arg-255 the chain is on the cytoplasmic side. The chain crosses the membrane as a helical span at residues Ala-256–Leu-276. Topologically, residues Pro-277–Lys-334 are extracellular. A helical membrane pass occupies residues Ile-335–Trp-355. Residues Thr-356–His-374 lie on the Cytoplasmic side of the membrane. Residues Leu-375–Phe-395 form a helical membrane-spanning segment. Residues Thr-396–Leu-433 lie on the Extracellular side of the membrane. Residues Val-434–Ile-454 traverse the membrane as a helical segment. The Cytoplasmic segment spans residues Asp-455–Arg-459. Residues Ile-460–Thr-480 form a helical membrane-spanning segment. Residues Ser-481–Thr-523 lie on the Extracellular side of the membrane. Residues Val-524–Ile-544 form a helical membrane-spanning segment. The Cytoplasmic portion of the chain corresponds to Pro-545–Asn-586.

Belongs to the major facilitator superfamily. CAR1 family.

It localises to the membrane. In terms of biological role, probable transporter that confers resistance to short-chain monocarboxylic acids and quinidine. The protein is Probable transporter AQR1 (AQR1) of Saccharomyces cerevisiae (strain ATCC 204508 / S288c) (Baker's yeast).